The following is a 244-amino-acid chain: 3-oxoacyl-[acyl-carrier-protein] reductase FabG (244 aa).

NADP(+)-binding positions include 12 to 15, T37, 59 to 60, and N86; these read GASR and NV. S138 lines the substrate pocket. Residue Y151 is the Proton acceptor of the active site. Residues 151–155 and I184 each bind NADP(+); that span reads YAAAK.

Belongs to the short-chain dehydrogenases/reductases (SDR) family. In terms of assembly, homotetramer.

It carries out the reaction a (3R)-hydroxyacyl-[ACP] + NADP(+) = a 3-oxoacyl-[ACP] + NADPH + H(+). It functions in the pathway lipid metabolism; fatty acid biosynthesis. Catalyzes the NADPH-dependent reduction of beta-ketoacyl-ACP substrates to beta-hydroxyacyl-ACP products, the first reductive step in the elongation cycle of fatty acid biosynthesis. The chain is 3-oxoacyl-[acyl-carrier-protein] reductase FabG (fabG) from Vibrio harveyi (Beneckea harveyi).